We begin with the raw amino-acid sequence, 309 residues long: Protoheme IX farnesyltransferase (309 aa).

9 consecutive transmembrane segments (helical) span residues 35–55 (IGIVNSNLITTFAGMWLAFYF), 64–84 (LHLVFFTLFGAALVIAGSCAI), 114–134 (VLWLGIGLVAIGEMGLLMTTV), 135–155 (TAAVVGLIGMATYVFLYTLWT), 161–181 (INTVVGSISGAVPPVIGWTAV), 187–207 (IVPLILFLIMFLWQPPHFLAL), 231–251 (MTKRQIIVWVACLLPLPFYLF), 253–273 (LGVPFLIVATLLNVGWLLLGL), and 289–309 (FVYSLNYLTILFVAMIIATLW).

Belongs to the UbiA prenyltransferase family. Protoheme IX farnesyltransferase subfamily. Interacts with CtaA.

Its subcellular location is the cell membrane. It catalyses the reaction heme b + (2E,6E)-farnesyl diphosphate + H2O = Fe(II)-heme o + diphosphate. The protein operates within porphyrin-containing compound metabolism; heme O biosynthesis; heme O from protoheme: step 1/1. Functionally, converts heme B (protoheme IX) to heme O by substitution of the vinyl group on carbon 2 of heme B porphyrin ring with a hydroxyethyl farnesyl side group. The sequence is that of Protoheme IX farnesyltransferase from Geobacillus kaustophilus (strain HTA426).